The following is a 343-amino-acid chain: 3-dehydroquinate synthase (343 aa).

Residues 61–66 (SGEKYK), 95–96 (GV), 119–120 (TT), Lys132, Lys141, Asn142, and 159–162 (FLKT) contribute to the NAD(+) site. Zn(2+)-binding residues include Glu174, His231, and His248.

Belongs to the sugar phosphate cyclases superfamily. Dehydroquinate synthase family. Homodimer. NAD(+) is required as a cofactor. Co(2+) serves as cofactor. It depends on Zn(2+) as a cofactor.

It localises to the cytoplasm. It catalyses the reaction 7-phospho-2-dehydro-3-deoxy-D-arabino-heptonate = 3-dehydroquinate + phosphate. It functions in the pathway metabolic intermediate biosynthesis; chorismate biosynthesis; chorismate from D-erythrose 4-phosphate and phosphoenolpyruvate: step 2/7. Catalyzes the conversion of 3-deoxy-D-arabino-heptulosonate 7-phosphate (DAHP) to dehydroquinate (DHQ). In Helicobacter pylori (strain ATCC 700392 / 26695) (Campylobacter pylori), this protein is 3-dehydroquinate synthase.